Consider the following 143-residue polypeptide: Pre-mRNA-splicing factor U5-Cwc21 (143 aa).

A CWF21 domain is found at 27–70 (EHHRSLRAIKLKVLLYREEREAAGVPPDVISRECATLHGSLLRN).

Belongs to the CWC21 family. As to quaternary structure, associates with the NTC complex (or PRP19-associated complex). The NTC complex associates with the spliceosome after the release of the U1 and U4 snRNAs and forms the CWC spliceosome subcomplex reminiscent of a late-stage spliceosome. Associates specifically with U5-containing snRNPs.

It localises to the cytoplasm. Its subcellular location is the nucleus. Its function is as follows. Essential protein involved in pre-mRNA cis- and trans-splicing. May function at or prior to the first catalytic step of splicing at the catalytic center of the spliceosome. May do so by stabilizing the catalytic center or the position of the RNA substrate. The chain is Pre-mRNA-splicing factor U5-Cwc21 from Trypanosoma brucei brucei (strain 927/4 GUTat10.1).